Reading from the N-terminus, the 144-residue chain is Large ribosomal subunit protein uL13 (144 aa).

Belongs to the universal ribosomal protein uL13 family. Part of the 50S ribosomal subunit.

In terms of biological role, this protein is one of the early assembly proteins of the 50S ribosomal subunit, although it is not seen to bind rRNA by itself. It is important during the early stages of 50S assembly. This Lachnoclostridium phytofermentans (strain ATCC 700394 / DSM 18823 / ISDg) (Clostridium phytofermentans) protein is Large ribosomal subunit protein uL13.